The chain runs to 156 residues: Small ribosomal subunit protein uS7 (156 aa).

This sequence belongs to the universal ribosomal protein uS7 family. As to quaternary structure, part of the 30S ribosomal subunit. Contacts proteins S9 and S11.

In terms of biological role, one of the primary rRNA binding proteins, it binds directly to 16S rRNA where it nucleates assembly of the head domain of the 30S subunit. Is located at the subunit interface close to the decoding center, probably blocks exit of the E-site tRNA. The sequence is that of Small ribosomal subunit protein uS7 from Aster yellows witches'-broom phytoplasma (strain AYWB).